The following is a 120-amino-acid chain: NAD(P)H-quinone oxidoreductase subunit 3, chloroplastic (120 aa).

3 helical membrane passes run 9–29 (IFWA…LISG), 64–84 (MFAL…PWAM), and 88–108 (VLGV…IVGS).

It belongs to the complex I subunit 3 family. As to quaternary structure, NDH is composed of at least 16 different subunits, 5 of which are encoded in the nucleus.

It localises to the plastid. Its subcellular location is the chloroplast thylakoid membrane. It catalyses the reaction a plastoquinone + NADH + (n+1) H(+)(in) = a plastoquinol + NAD(+) + n H(+)(out). The enzyme catalyses a plastoquinone + NADPH + (n+1) H(+)(in) = a plastoquinol + NADP(+) + n H(+)(out). Its function is as follows. NDH shuttles electrons from NAD(P)H:plastoquinone, via FMN and iron-sulfur (Fe-S) centers, to quinones in the photosynthetic chain and possibly in a chloroplast respiratory chain. The immediate electron acceptor for the enzyme in this species is believed to be plastoquinone. Couples the redox reaction to proton translocation, and thus conserves the redox energy in a proton gradient. This chain is NAD(P)H-quinone oxidoreductase subunit 3, chloroplastic, found in Platanus occidentalis (Sycamore).